The primary structure comprises 246 residues: Ribonuclease 3 (246 aa).

The region spanning 18 to 147 (FQELQNKIGI…FIGALYLDQG (130 aa)) is the RNase III domain. Glu-60 lines the Mg(2+) pocket. Residue Asp-64 is part of the active site. Residues Asp-133 and Glu-136 each contribute to the Mg(2+) site. Residue Glu-136 is part of the active site. The 70-residue stretch at 173-242 (DFKSQLQELV…AQMALETLRA (70 aa)) folds into the DRBM domain.

It belongs to the ribonuclease III family. In terms of assembly, homodimer. Mg(2+) is required as a cofactor.

It localises to the cytoplasm. The catalysed reaction is Endonucleolytic cleavage to 5'-phosphomonoester.. Digests double-stranded RNA. Involved in the processing of primary rRNA transcript to yield the immediate precursors to the large and small rRNAs (23S and 16S). Processes some mRNAs, and tRNAs when they are encoded in the rRNA operon. Processes pre-crRNA and tracrRNA of type II CRISPR loci if present in the organism. The sequence is that of Ribonuclease 3 from Geobacillus kaustophilus (strain HTA426).